The primary structure comprises 603 residues: UvrABC system protein C (603 aa).

One can recognise a GIY-YIG domain in the interval 17–94; sequence TTSGCYKMLN…IKTHKPDYNV (78 aa). In terms of domain architecture, UVR spans 199–234; that stretch reads SEILSQIDIKLKLAVQKEDFETAIKLKEMKSSLIEI.

Belongs to the UvrC family. In terms of assembly, interacts with UvrB in an incision complex.

It is found in the cytoplasm. In terms of biological role, the UvrABC repair system catalyzes the recognition and processing of DNA lesions. UvrC both incises the 5' and 3' sides of the lesion. The N-terminal half is responsible for the 3' incision and the C-terminal half is responsible for the 5' incision. This Borrelia garinii subsp. bavariensis (strain ATCC BAA-2496 / DSM 23469 / PBi) (Borreliella bavariensis) protein is UvrABC system protein C.